A 217-amino-acid chain; its full sequence is Adenylate kinase (217 aa).

10-15 (GAGKGT) lines the ATP pocket. Residues 30–59 (STGDMFREAVAAGTELGVKVQNILSSGALV) are NMP. Residues Thr31, Arg36, 57-59 (ALV), 85-88 (GYPR), and Gln92 each bind AMP. The segment at 126-163 (SRRICPKCGKIYNLISMPPVSDQICDDCGEQLVIREDD) is LID. Arg127 contributes to the ATP binding site. Zn(2+) is bound by residues Cys130 and Cys133. 136 to 137 (IY) is an ATP binding site. Residues Cys150 and Cys153 each coordinate Zn(2+). AMP-binding residues include Arg160 and Arg171. Residue Arg199 coordinates ATP.

The protein belongs to the adenylate kinase family. As to quaternary structure, monomer.

The protein localises to the cytoplasm. It catalyses the reaction AMP + ATP = 2 ADP. It participates in purine metabolism; AMP biosynthesis via salvage pathway; AMP from ADP: step 1/1. In terms of biological role, catalyzes the reversible transfer of the terminal phosphate group between ATP and AMP. Plays an important role in cellular energy homeostasis and in adenine nucleotide metabolism. The polypeptide is Adenylate kinase (Pseudothermotoga lettingae (strain ATCC BAA-301 / DSM 14385 / NBRC 107922 / TMO) (Thermotoga lettingae)).